The sequence spans 473 residues: P3 protein (473 aa).

9 helical membrane-spanning segments follow: residues 25-45, 221-241, 249-269, 277-297, 316-336, 356-376, 381-401, 413-433, and 446-466; these read FVGM…AQVM, PMLL…FLMA, ALAL…SYLF, VTLA…FLPL, ISKI…GVVI, FILL…ILVG, IVLV…SLAI, VSIE…QLSL, and FIVA…QFIY.

This sequence belongs to the bile acid:sodium symporter (BASS) (TC 2.A.28) family.

The protein resides in the membrane. The ubiquitous expression and the conservation of the sequence in distant animal species suggest that the gene codes for a protein with housekeeping functions. This is P3 protein (Slc10a3) from Mus musculus (Mouse).